Reading from the N-terminus, the 846-residue chain is MAASEVSIQGYSEPSDGSRPVSETGRSSSGVGIVDADTALYTELWRSCAGPLVTVPREGELVYYFPQGHIEQVEASTNQVADQQMPLYNLPSKILCRVVNVLLKAEPDTDEVYAQVTLMPEPNQDENAVKKEPMRPPPPRFHVHSFCKTLTASDTSTHGGFSVLRRHADECLPQLDMSRQPPTQELVAKDLHGNEWRFRHIFRGQPRRHLLQSGWSVFVSSKRLVAGDAFIFLRGENGELRVGVRRAMRQQGNAPSSVISSHSMHLGVLATAWHAIQTKTMFTVYYKPRTSPAEFIVPYDHYMESVKNNYSIGMRFKMRFEGEEAPEQRFTGTIVGIEDADPQRWLESKWRCLKVRWDENSSIPRPDRVSPWKIEPALSPPALNVPPVARPKRPRSSILPTSPDSSVLTREGSSRATADHSQASGFPRVLQGQELSTFRGGFAEINETDLSEKPMIWQTSVNDEKNDIHSASKRYLPDKWLPLGRPESSLTDLLSGFGSSHGFCLPSADQAAFGARLVKQQTQDQEKDFSLLGKPWSLLSSGLSLNLMDSGSKAPGIGGDTPYQMRGDARYSGYGEFSVLPGHRVANQQGSWIMPQPVSPYMQLSSHSREMMHKPSVVKQPEAVKPKEGNYKLFGIPLTSNVCTDAVMMRKSSLIDPASDMNIGIHPHQSLATDSDQRSEQSKGSKVDDGVAANDHDKQFHTFHLAARDKDGKGHSSSTRSCTKVHKQGTALGRSVDLAKFNNYDELIAELDQLFDFNGELKARSKSWLVVYTDDEGDMMLVGDDPWQEFCGMVRKIFIYTKEEVQRMNPGTLNSKGEDTSSVAEGSDAKEVKNLQLPSESGQAES.

The span at 1–12 (MAASEVSIQGYS) shows a compositional bias: polar residues. The disordered stretch occupies residues 1-30 (MAASEVSIQGYSEPSDGSRPVSETGRSSSG). Residues 146 to 248 (FCKTLTASDT…ELRVGVRRAM (103 aa)) constitute a DNA-binding region (TF-B3). Disordered stretches follow at residues 380-423 (PPAL…HSQA) and 660-693 (DMNI…GVAA). Composition is skewed to polar residues over residues 398-408 (ILPTSPDSSVL) and 414-423 (SRATADHSQA). The segment covering 675–693 (SDQRSEQSKGSKVDDGVAA) has biased composition (basic and acidic residues). The region spanning 720–804 (RSCTKVHKQG…RKIFIYTKEE (85 aa)) is the PB1 domain. 2 stretches are compositionally biased toward polar residues: residues 809–824 (NPGT…SSVA) and 836–846 (QLPSESGQAES). The segment at 809-846 (NPGTLNSKGEDTSSVAEGSDAKEVKNLQLPSESGQAES) is disordered.

It belongs to the ARF family. As to quaternary structure, homodimers and heterodimers. Interacts with ASR1. As to expression, expressed in root, leaf and flower. Expressed in flower buds about three days before opening including ovary, petal and sepal with the highest in stamen. Expressed in stem. Expressed in fruit. Expressed in seeds.

It is found in the nucleus. Auxin response factors (ARFs) are transcriptional factors that bind specifically to the DNA sequence 5'-TGTCTC-3' found in the auxin-responsive promoter elements (AuxREs). Could act as transcriptional activator or repressor. Involved in the control of fruit ripening process. Regulates expression of a number of ripening regulators, transcription factors, and ethylene biosynthesis and signaling components. May act as a transcriptional repressor of auxin-responsive genes. Regulates vegetative growth, lateral root formation and flower organ senescence, possibly partially by regulating gene expression of auxin and ethylene response factor (ERF) genes. Plays a negative role in axillary shoot meristem formation. This is Auxin response factor 2A from Solanum lycopersicum (Tomato).